The following is a 387-amino-acid chain: Flap endonuclease 1 (387 aa).

The N-domain stretch occupies residues 1 to 104; the sequence is MGILGLSKLI…GELAKRAERR (104 aa). Position 34 (aspartate 34) interacts with Mg(2+). 2 residues coordinate DNA: arginine 47 and arginine 70. 5 residues coordinate Mg(2+): aspartate 86, glutamate 158, glutamate 160, aspartate 179, and aspartate 181. The interval 122-253 is I-domain; the sequence is GIEKFNRRLV…KRAIELINNY (132 aa). Glutamate 158 provides a ligand contact to DNA. DNA-binding residues include glycine 231 and aspartate 233. Residue aspartate 233 coordinates Mg(2+). Residues 336–344 form an interaction with PCNA region; that stretch reads TQVRLDSFF. Residues 345 to 387 are disordered; it reads KTLPSTPNATNAAKRKAEEAKKSANNKKAKTSGGGGGRGRRPK.

The protein belongs to the XPG/RAD2 endonuclease family. FEN1 subfamily. As to quaternary structure, interacts with PCNA. Three molecules of FEN1 bind to one PCNA trimer with each molecule binding to one PCNA monomer. PCNA stimulates the nuclease activity without altering cleavage specificity. It depends on Mg(2+) as a cofactor. Post-translationally, phosphorylated. Phosphorylation upon DNA damage induces relocalization to the nuclear plasma.

It localises to the nucleus. The protein localises to the nucleolus. It is found in the nucleoplasm. Its subcellular location is the mitochondrion. In terms of biological role, structure-specific nuclease with 5'-flap endonuclease and 5'-3' exonuclease activities involved in DNA replication and repair. During DNA replication, cleaves the 5'-overhanging flap structure that is generated by displacement synthesis when DNA polymerase encounters the 5'-end of a downstream Okazaki fragment. It enters the flap from the 5'-end and then tracks to cleave the flap base, leaving a nick for ligation. Also involved in the long patch base excision repair (LP-BER) pathway, by cleaving within the apurinic/apyrimidinic (AP) site-terminated flap. Acts as a genome stabilization factor that prevents flaps from equilibrating into structures that lead to duplications and deletions. Also possesses 5'-3' exonuclease activity on nicked or gapped double-stranded DNA, and exhibits RNase H activity. Also involved in replication and repair of rDNA and in repairing mitochondrial DNA. This chain is Flap endonuclease 1, found in Drosophila yakuba (Fruit fly).